Consider the following 321-residue polypeptide: UDP-N-acetyl-alpha-D-glucosaminuronate decarboxylase (321 aa).

Residues glycine 12, phenylalanine 13, isoleucine 14, aspartate 33, asparagine 34, tyrosine 36, glycine 38, leucine 76, threonine 95, alanine 117, tyrosine 148, and lysine 152 each contribute to the NAD(+) site. Residue tyrosine 148 is the Proton acceptor of the active site.

This sequence belongs to the NAD(P)-dependent epimerase/dehydratase family. Homodimer. The cofactor is NAD(+).

It catalyses the reaction UDP-2-acetamido-2-deoxy-alpha-D-glucuronate + H(+) = UDP-N-acetyl-alpha-D-xylosamine + CO2. With respect to regulation, activity is completely inhibited by NADH but not by NADPH. Functionally, decarboxylase involved in the biosynthesis of the nucleotide-sugar UDP-N-acetylxylosamine (UDP-XylNAc). Catalyzes the NAD-dependent decarboxylation of UDP-N-acetylglucosaminuronic acid (UDP-GlcNAcA) to UDP-XylNAc. Cannot use other UDP-uronates, such as UDP-glucuronic acid (UDP-GlcA) and UDP-galacturonic acid (UDP-GalA). The sequence is that of UDP-N-acetyl-alpha-D-glucosaminuronate decarboxylase from Bacillus cytotoxicus (strain DSM 22905 / CIP 110041 / 391-98 / NVH 391-98).